A 465-amino-acid polypeptide reads, in one-letter code: Probable Xaa-Pro aminopeptidase pepP (465 aa).

4 residues coordinate Mn(2+): aspartate 263, aspartate 274, glutamate 397, and glutamate 437.

Belongs to the peptidase M24B family. It depends on Mn(2+) as a cofactor.

The catalysed reaction is Release of any N-terminal amino acid, including proline, that is linked to proline, even from a dipeptide or tripeptide.. Functionally, catalyzes the removal of a penultimate prolyl residue from the N-termini of peptides. The chain is Probable Xaa-Pro aminopeptidase pepP (pepP) from Penicillium rubens (strain ATCC 28089 / DSM 1075 / NRRL 1951 / Wisconsin 54-1255) (Penicillium chrysogenum).